The sequence spans 318 residues: Cytochrome c biogenesis protein CcsA (318 aa).

Helical transmembrane passes span 17-37 (VLAL…ISFW), 45-65 (SAVV…QLVL), 75-95 (ISNL…AQLL), 104-124 (IVSA…SFAL), 149-169 (VIMC…AVLF), 224-244 (TITV…VWAN), 258-275 (TWAL…HTRF), and 287-307 (VAVA…LLGI).

Belongs to the CcmF/CycK/Ccl1/NrfE/CcsA family. As to quaternary structure, may interact with ccs1.

It is found in the cellular thylakoid membrane. Functionally, required during biogenesis of c-type cytochromes (cytochrome c6 and cytochrome f) at the step of heme attachment. The sequence is that of Cytochrome c biogenesis protein CcsA from Prochlorococcus marinus (strain MIT 9313).